Consider the following 310-residue polypeptide: MKIIIDTDPGQDDAITALLAIASPEIELLGVTTVAGNVPVSMTTRNALQMLDLAGRPDIPVYAGSNKPLLRAPITATHVHGASGFEGAVLPPPSRKENEGHAVDFIIDTLRNNEPGTITICTIGPLTNIALALNKAPEVIQRAKQIVMMAGAFSEVGNITPAAEFNIYVDPHAAQMVLSSGIPIVMMPLDITHQLHTSAKRIARMEALPNRVGPVVAAWLRMEKAYEAKKYGTDGGPLHDPNTVMWLLRPDIYSGRKVNVQIETQSELTMGMSVVDWWQVGLLPANVTFLRTVDDDEFYEVLIERLGRLP.

The active site involves histidine 239.

This sequence belongs to the IUNH family.

The protein resides in the cytoplasm. It is found in the nucleus. This is an uncharacterized protein from Schizosaccharomyces pombe (strain 972 / ATCC 24843) (Fission yeast).